We begin with the raw amino-acid sequence, 227 residues long: MRLTYFGHSAFLLELARTRLLFDPYLRENPHGSVDPKSVPCDLVFCSHAHSDHVGDALELARLHHAKIVAPYELAEHFAAQGAETIDLMPGGGVTLPWGRIDMTPAIHGSALELGDGKTLSMGPPSGFVVRADGQSLYHAGDTALFGDMRLIGRHGIDVALLPIGDFYTMGPADAVEALHLLRPRLAIPMHFNSNPKIRVDPHRFAAEARRTGHPVRVMSPGETIEV.

It belongs to the UPF0173 family.

The polypeptide is UPF0173 metal-dependent hydrolase Oter_4201 (Opitutus terrae (strain DSM 11246 / JCM 15787 / PB90-1)).